The following is a 396-amino-acid chain: 1-deoxy-D-xylulose 5-phosphate reductoisomerase (396 aa).

Residues T13, G14, S15, I16, and N127 each contribute to the NADPH site. K128 lines the 1-deoxy-D-xylulose 5-phosphate pocket. E129 provides a ligand contact to NADPH. D153 contributes to the Mn(2+) binding site. 1-deoxy-D-xylulose 5-phosphate-binding residues include S154, E155, S184, and H207. E155 lines the Mn(2+) pocket. G213 is an NADPH binding site. S220, N225, K226, and E229 together coordinate 1-deoxy-D-xylulose 5-phosphate. E229 is a binding site for Mn(2+).

Belongs to the DXR family. Requires Mg(2+) as cofactor. The cofactor is Mn(2+).

The enzyme catalyses 2-C-methyl-D-erythritol 4-phosphate + NADP(+) = 1-deoxy-D-xylulose 5-phosphate + NADPH + H(+). Its pathway is isoprenoid biosynthesis; isopentenyl diphosphate biosynthesis via DXP pathway; isopentenyl diphosphate from 1-deoxy-D-xylulose 5-phosphate: step 1/6. Catalyzes the NADPH-dependent rearrangement and reduction of 1-deoxy-D-xylulose-5-phosphate (DXP) to 2-C-methyl-D-erythritol 4-phosphate (MEP). The protein is 1-deoxy-D-xylulose 5-phosphate reductoisomerase of Pseudomonas paraeruginosa (strain DSM 24068 / PA7) (Pseudomonas aeruginosa (strain PA7)).